A 218-amino-acid polypeptide reads, in one-letter code: uncharacterized protein (218 aa).

A helical transmembrane segment spans residues 11 to 31; sequence AAGLFPLALMLSGCISYALVS.

Its subcellular location is the membrane. This is an uncharacterized protein from Escherichia coli (strain K12).